A 468-amino-acid chain; its full sequence is UDP-N-acetylmuramate--L-alanine ligase (468 aa).

112–118 (GTHGKTT) serves as a coordination point for ATP.

The protein belongs to the MurCDEF family.

Its subcellular location is the cytoplasm. The enzyme catalyses UDP-N-acetyl-alpha-D-muramate + L-alanine + ATP = UDP-N-acetyl-alpha-D-muramoyl-L-alanine + ADP + phosphate + H(+). The protein operates within cell wall biogenesis; peptidoglycan biosynthesis. Its function is as follows. Cell wall formation. The polypeptide is UDP-N-acetylmuramate--L-alanine ligase (Bordetella bronchiseptica (strain ATCC BAA-588 / NCTC 13252 / RB50) (Alcaligenes bronchisepticus)).